A 263-amino-acid polypeptide reads, in one-letter code: NADH dehydrogenase [ubiquinone] iron-sulfur protein 3, mitochondrial (263 aa).

A mitochondrion-targeting transit peptide spans 1-35; sequence MVAAVARLWWRGLLGASALTRGAGRPSVLLLPVRR.

This sequence belongs to the complex I 30 kDa subunit family. In terms of assembly, core subunit of respiratory chain NADH dehydrogenase (Complex I) which is composed of 45 different subunits. Interacts with NDUFAF3. Interacts with RAB5IF. Found in subcomplexes containing subunits NDUFS2, MT-ND1 and NDUFA13.

It is found in the mitochondrion inner membrane. The enzyme catalyses a ubiquinone + NADH + 5 H(+)(in) = a ubiquinol + NAD(+) + 4 H(+)(out). In terms of biological role, core subunit of the mitochondrial membrane respiratory chain NADH dehydrogenase (Complex I) which catalyzes electron transfer from NADH through the respiratory chain, using ubiquinone as an electron acceptor. Essential for the catalytic activity and assembly of complex I. In Pongo pygmaeus (Bornean orangutan), this protein is NADH dehydrogenase [ubiquinone] iron-sulfur protein 3, mitochondrial (NDUFS3).